We begin with the raw amino-acid sequence, 542 residues long: Peptide chain release factor 3 (542 aa).

A tr-type G domain is found at 11–279 (EKRRTFAIIS…AYVEYAPSPR (269 aa)). GTP-binding positions include 20 to 27 (SHPDAGKT), 88 to 92 (DTPGH), and 142 to 145 (NKLD).

Belongs to the TRAFAC class translation factor GTPase superfamily. Classic translation factor GTPase family. PrfC subfamily.

The protein localises to the cytoplasm. In terms of biological role, increases the formation of ribosomal termination complexes and stimulates activities of RF-1 and RF-2. It binds guanine nucleotides and has strong preference for UGA stop codons. It may interact directly with the ribosome. The stimulation of RF-1 and RF-2 is significantly reduced by GTP and GDP, but not by GMP. In Nitrosococcus oceani (strain ATCC 19707 / BCRC 17464 / JCM 30415 / NCIMB 11848 / C-107), this protein is Peptide chain release factor 3.